A 217-amino-acid chain; its full sequence is Small ribosomal subunit protein uS3 (217 aa).

In terms of domain architecture, KH type-2 spans 38–106; sequence VRKYIETALK…RVHINIIEIK (69 aa).

It belongs to the universal ribosomal protein uS3 family. Part of the 30S ribosomal subunit. Forms a tight complex with proteins S10 and S14.

In terms of biological role, binds the lower part of the 30S subunit head. Binds mRNA in the 70S ribosome, positioning it for translation. This chain is Small ribosomal subunit protein uS3, found in Lysinibacillus sphaericus (strain C3-41).